The primary structure comprises 328 residues: NADH-quinone oxidoreductase subunit H 1 (328 aa).

Helical transmembrane passes span Val-11–Phe-31, Leu-81–Pro-101, Val-116–Ala-136, Ile-154–Val-174, Leu-189–Trp-209, Gly-235–Leu-257, Ile-269–Ile-289, and Val-308–Ala-328.

The protein belongs to the complex I subunit 1 family. In terms of assembly, NDH-1 is composed of 14 different subunits. Subunits NuoA, H, J, K, L, M, N constitute the membrane sector of the complex.

It is found in the cell membrane. The enzyme catalyses a quinone + NADH + 5 H(+)(in) = a quinol + NAD(+) + 4 H(+)(out). Its function is as follows. NDH-1 shuttles electrons from NADH, via FMN and iron-sulfur (Fe-S) centers, to quinones in the respiratory chain. The immediate electron acceptor for the enzyme in this species is believed to be ubiquinone. Couples the redox reaction to proton translocation (for every two electrons transferred, four hydrogen ions are translocated across the cytoplasmic membrane), and thus conserves the redox energy in a proton gradient. This subunit may bind ubiquinone. In Symbiobacterium thermophilum (strain DSM 24528 / JCM 14929 / IAM 14863 / T), this protein is NADH-quinone oxidoreductase subunit H 1.